The chain runs to 299 residues: Probable lipid kinase YegS (299 aa).

Residues 2-133 (ANFPASLLIL…IDMARVNDKT (132 aa)) form the DAGKc domain. ATP-binding positions include T40, 66–72 (GDGTINE), and T95. L215, D218, and L220 together coordinate Mg(2+). Residue E271 is the Proton acceptor of the active site.

Belongs to the diacylglycerol/lipid kinase family. YegS lipid kinase subfamily. Requires Mg(2+) as cofactor. Ca(2+) serves as cofactor.

It localises to the cytoplasm. In terms of biological role, probably phosphorylates lipids; the in vivo substrate is unknown. This chain is Probable lipid kinase YegS, found in Salmonella newport (strain SL254).